The following is an 818-amino-acid chain: Catenin beta (818 aa).

2 stretches are compositionally biased toward polar residues: residues 1–21 (METYQQMNSGSGPRSVGTPQG) and 48–66 (GDSGIQSGATTQAPPSVSS). 2 disordered regions span residues 1-24 (METYQQMNSGSGPRSVGTPQGQYM) and 48-71 (GDSGIQSGATTQAPPSVSSKHGLD). ARM repeat units lie at residues 164–203 (NYQDDADLATRAIPELTKLLNDEDQVVVSQAAMMVHQLSK), 248–287 (RQGLLTIFKSGGIPALVKLLSSPVESVLFYAITTLHNLLL), 412–451 (DAATKSSDIEGLLQMLVQLLASNDINIVTCAAGILSNLTC), 454–495 (QRNK…HLTS), 501–541 (EMAQ…NLAL), 543–582 (PANHAPLREHGAIPRIVQLLIRAHQDTQRRATAGSGNTSA), and 648–687 (KEGAEMIEQEGTTAPLTELLHSRNEGVATYAAAVLFRMSE). Residues 732–818 (QGFRGYQGSG…QMAAWFDTDL (87 aa)) are disordered.

Belongs to the beta-catenin family.

It is found in the cytoplasm. It localises to the cytoskeleton. In terms of biological role, binds to the cytoplasmic domain of the cell-cell adhesion molecule E-cadherin, and perhaps to other (membrane) proteins. The association of catenins to cadherins produces a complex which is linked to the actin filament network, and which seems to be of primary importance for cadherins cell-adhesion properties. In Urechis caupo (Innkeeper worm), this protein is Catenin beta.